The chain runs to 90 residues: Small ribosomal subunit protein uS15c (90 aa).

It belongs to the universal ribosomal protein uS15 family. As to quaternary structure, part of the 30S ribosomal subunit.

It is found in the plastid. This Cuscuta reflexa (Southern Asian dodder) protein is Small ribosomal subunit protein uS15c (rps15).